Consider the following 338-residue polypeptide: Anthranilate phosphoribosyltransferase (338 aa).

5-phospho-alpha-D-ribose 1-diphosphate is bound by residues glycine 81, 84-85, serine 89, 91-94, 109-117, and serine 121; these read GD, NIST, and KHGNRSVSS. Anthranilate is bound at residue glycine 81. Residue serine 93 participates in Mg(2+) binding. Asparagine 112 is an anthranilate binding site. Anthranilate is bound at residue arginine 167. Positions 226 and 227 each coordinate Mg(2+).

It belongs to the anthranilate phosphoribosyltransferase family. Homodimer. Mg(2+) is required as a cofactor.

It carries out the reaction N-(5-phospho-beta-D-ribosyl)anthranilate + diphosphate = 5-phospho-alpha-D-ribose 1-diphosphate + anthranilate. The protein operates within amino-acid biosynthesis; L-tryptophan biosynthesis; L-tryptophan from chorismate: step 2/5. Its function is as follows. Catalyzes the transfer of the phosphoribosyl group of 5-phosphorylribose-1-pyrophosphate (PRPP) to anthranilate to yield N-(5'-phosphoribosyl)-anthranilate (PRA). This chain is Anthranilate phosphoribosyltransferase, found in Thioalkalivibrio sulfidiphilus (strain HL-EbGR7).